A 293-amino-acid chain; its full sequence is Movement protein BC1 (293 aa).

Belongs to the begomovirus movement protein BC1 family. Binds to dimeric supercoiled plasmid DNA. Phosphorylated.

The protein localises to the host cell membrane. The protein resides in the host microsome membrane. Its subcellular location is the host endoplasmic reticulum membrane. Its function is as follows. Transports viral genome to neighboring plant cells directly through plasmosdesmata, without any budding. The movement protein allows efficient cell to cell propagation, by bypassing the host cell wall barrier. Begomovirus genome is shuttled out of nucleus by Nuclear shuttle protein (NSP) and the movement protein transports the DNA-NSP complex to cell plasmodesmata and facilitates further movement across the cell wall. The sequence is that of Movement protein BC1 from Macroptilium lathyroides (Lima bean).